The chain runs to 360 residues: Diacylglycerol O-acyltransferase 3 (360 aa).

Residues 153–182 form a disordered region; the sequence is KAKAMKKMTEMDSESSSSSESSDSDCDKGK. [2Fe-2S] cluster-binding residues include cysteine 265, cysteine 270, cysteine 298, and cysteine 302.

It belongs to the diacylglycerol acyltransferase family. The cofactor is [2Fe-2S] cluster.

The catalysed reaction is an acyl-CoA + a 1,2-diacyl-sn-glycerol = a triacyl-sn-glycerol + CoA. Its pathway is glycerolipid metabolism; triacylglycerol biosynthesis. Involved in triacylglycerol (TAG) biosynthesis. Catalyzes the acylation of the sn-3 hydroxy group of sn-1,2-diacylglycerol using acyl-CoA. May preferentially use linolenoyl-CoA as substrate and to a lesser extent linoleoyl-CoA. May contribute to the active recycling of linoleate and linolenate into TAG when seed oil breakdown is blocked. The chain is Diacylglycerol O-acyltransferase 3 from Arabidopsis thaliana (Mouse-ear cress).